A 253-amino-acid chain; its full sequence is Non-homologous end joining protein Ku (253 aa).

The Ku domain occupies 9–192 (ISFGLVNIPV…EITEEELELA (184 aa)).

It belongs to the prokaryotic Ku family. In terms of assembly, homodimer. Interacts with LigD.

Its function is as follows. With LigD forms a non-homologous end joining (NHEJ) DNA repair enzyme, which repairs dsDNA breaks with reduced fidelity. Binds linear dsDNA with 5'- and 3'- overhangs but not closed circular dsDNA nor ssDNA. Recruits and stimulates the ligase activity of LigD. This Archaeoglobus fulgidus (strain ATCC 49558 / DSM 4304 / JCM 9628 / NBRC 100126 / VC-16) protein is Non-homologous end joining protein Ku.